A 339-amino-acid chain; its full sequence is MNDTFLKACRGEKTDYTPIWMMRQAGRYLPAYQKIRGKVSFLELCKNPALCVEVTLQPVDLLGMDAAILFSDILILMEAMGAKLEFNEGCGPVFPNPIKDQTALDALIIPDADDATGFVMETIRLLRGELQVPLIGFAGAPFTCATYLIEGGSSKVFWETKKMMFTQPELFHGIMEKITQATILYLQAQARAGAQALQIFDSWAGVLAPCDFEVFALPYVRRIIASLQQFDLPIIYFANNGSTLLEMSASSGASVLGLDWRINIGDAGKRVPGIALQGNIDPFALLLPKDKLRKRIGTILEDAKEVKGHIFNLGHGIHQFTPPEQARIAVDAVHELSCK.

Substrate-binding positions include 23-27 (RQAGR), D72, Y147, S202, and H315.

It belongs to the uroporphyrinogen decarboxylase family. In terms of assembly, homodimer.

The protein localises to the cytoplasm. It carries out the reaction uroporphyrinogen III + 4 H(+) = coproporphyrinogen III + 4 CO2. It functions in the pathway porphyrin-containing compound metabolism; protoporphyrin-IX biosynthesis; coproporphyrinogen-III from 5-aminolevulinate: step 4/4. Catalyzes the decarboxylation of four acetate groups of uroporphyrinogen-III to yield coproporphyrinogen-III. In Desulfotalea psychrophila (strain LSv54 / DSM 12343), this protein is Uroporphyrinogen decarboxylase.